The following is a 365-amino-acid chain: Peptide chain release factor 2 (365 aa).

Gln252 carries the post-translational modification N5-methylglutamine.

This sequence belongs to the prokaryotic/mitochondrial release factor family. Post-translationally, methylated by PrmC. Methylation increases the termination efficiency of RF2.

The protein resides in the cytoplasm. In terms of biological role, peptide chain release factor 2 directs the termination of translation in response to the peptide chain termination codons UGA and UAA. This chain is Peptide chain release factor 2, found in Aeromonas salmonicida (strain A449).